Here is a 100-residue protein sequence, read N- to C-terminus: Large ribosomal subunit protein uL23 (100 aa).

This sequence belongs to the universal ribosomal protein uL23 family. As to quaternary structure, part of the 50S ribosomal subunit. Contacts protein L29, and trigger factor when it is bound to the ribosome.

Functionally, one of the early assembly proteins it binds 23S rRNA. One of the proteins that surrounds the polypeptide exit tunnel on the outside of the ribosome. Forms the main docking site for trigger factor binding to the ribosome. The polypeptide is Large ribosomal subunit protein uL23 (Mycobacterium tuberculosis (strain ATCC 25177 / H37Ra)).